The sequence spans 214 residues: Lazarillo protein (214 aa).

Positions 1-21 (MIRRGLLSVTAALVLLSVSCS) are cleaved as a signal peptide. 7 N-linked (GlcNAc...) asparagine glycosylation sites follow: Asn-38, Asn-74, Asn-84, Asn-90, Asn-130, Asn-158, and Asn-161. A lipid anchor (GPI-anchor amidated alanine) is attached at Ala-192. Residues 193–214 (GAEHVVGAMLSVAIASLFALLH) constitute a propeptide, removed in mature form.

It belongs to the calycin superfamily. Lipocalin family. N-glycosylated. Post-translationally, contains disulfide bonds. Expressed by a subset of neuroblasts, ganglion mother cells and neurons of the CNS; by all sensory neurons of the PNS.

The protein localises to the cell membrane. Functionally, putative role in axonal outgrowth and guidance, required for the navigation of identified commissural neurons. Could be a receptor the midline morphogen. This chain is Lazarillo protein, found in Schistocerca americana (American grasshopper).